We begin with the raw amino-acid sequence, 1272 residues long: AF4/FMR2 family member 2 (1272 aa).

Disordered stretches follow at residues 151–190, 204–231, 372–401, 422–497, 557–694, 715–743, and 772–899; these read SNRK…DPPQ, PQIG…DTFK, TLQK…EDDL, KAKP…QLDK, IREK…ETLQ, TLST…PAMQ, and PGQN…QDKN. A compositionally biased stretch (basic and acidic residues) spans 155-164; sequence SKSEWPRDSH. A compositionally biased stretch (low complexity) spans 165–179; that stretch reads NTSPAQASQTSSQPN. The span at 180-189 shows a compositional bias: polar residues; the sequence is KMQTSTQDPP. Residues 210 to 227 are compositionally biased toward low complexity; sequence EKSNPSSKEENNPNSGGE. Residues 374–384 are compositionally biased toward polar residues; that stretch reads QKWSDPSSRAS. Residues 387–396 are compositionally biased toward basic and acidic residues; the sequence is MLEDDLKLSS. The residue at position 395 (Ser-395) is a Phosphoserine. The span at 436-450 shows a compositional bias: polar residues; sequence TPQSTPATQTNVGSG. Thr-482 is subject to Phosphothreonine. Polar residues predominate over residues 580–590; it reads STSVDTVSQRT. A compositionally biased stretch (basic and acidic residues) spans 620–633; sequence PKEKGSVELPDPPR. Basic residues predominate over residues 634 to 644; that stretch reads SRNKATAHKPV. Over residues 715–734 the composition is skewed to low complexity; sequence TLSTLTNGNSNNLSTSNEET. Over residues 815–831 the composition is skewed to basic and acidic residues; that stretch reads PAETAEKIPEKKQRLED. Pro residues predominate over residues 841 to 850; sequence CISPAPPHKP. The span at 887–899 shows a compositional bias: polar residues; that stretch reads VSGNNGHFGQDKN.

It belongs to the AF4 family. As to expression, highly expressed in the hippocampus, the piriform cortex, Purkinje cells and the cingulate gyrus.

It is found in the nucleus speckle. Its function is as follows. RNA-binding protein. Might be involved in alternative splicing regulation through an interaction with G-quartet RNA structure. The protein is AF4/FMR2 family member 2 of Mus musculus (Mouse).